We begin with the raw amino-acid sequence, 398 residues long: Histone-lysine N-methyltransferase ASHR2 (398 aa).

Residues 11–270 (TLLRVAEIGG…EGREVCLSYF (260 aa)) enclose the SET domain.

It belongs to the class V-like SAM-binding methyltransferase superfamily. Histone-lysine methyltransferase family. SET2 subfamily.

The protein resides in the nucleus. It localises to the chromosome. It carries out the reaction L-lysyl-[histone] + S-adenosyl-L-methionine = N(6)-methyl-L-lysyl-[histone] + S-adenosyl-L-homocysteine + H(+). Histone methyltransferase. The polypeptide is Histone-lysine N-methyltransferase ASHR2 (ASHR2) (Arabidopsis thaliana (Mouse-ear cress)).